A 316-amino-acid polypeptide reads, in one-letter code: Acetaldehyde dehydrogenase 1 (316 aa).

12–15 (SGNI) is an NAD(+) binding site. Cysteine 132 (acyl-thioester intermediate) is an active-site residue. NAD(+) is bound by residues 163 to 171 (SAGPGTRAN) and asparagine 291.

It belongs to the acetaldehyde dehydrogenase family.

The catalysed reaction is acetaldehyde + NAD(+) + CoA = acetyl-CoA + NADH + H(+). This chain is Acetaldehyde dehydrogenase 1, found in Pseudomonas putida (strain ATCC 700007 / DSM 6899 / JCM 31910 / BCRC 17059 / LMG 24140 / F1).